A 263-amino-acid chain; its full sequence is Sulfur carrier protein FdhD (263 aa).

Cys107 acts as the Cysteine persulfide intermediate in catalysis.

This sequence belongs to the FdhD family.

It localises to the cytoplasm. Its function is as follows. Required for formate dehydrogenase (FDH) activity. Acts as a sulfur carrier protein that transfers sulfur from IscS to the molybdenum cofactor prior to its insertion into FDH. This Bacillus licheniformis (strain ATCC 14580 / DSM 13 / JCM 2505 / CCUG 7422 / NBRC 12200 / NCIMB 9375 / NCTC 10341 / NRRL NRS-1264 / Gibson 46) protein is Sulfur carrier protein FdhD.